The primary structure comprises 519 residues: Putative cytochrome P450 CYP13A10 (519 aa).

Residues 3-23 (VILLAIPTLFIGFISYYLWIW) traverse the membrane as a helical segment. Residue Cys-465 coordinates heme.

Belongs to the cytochrome P450 family. The cofactor is heme.

It localises to the membrane. In terms of biological role, cytochromes P450 are a group of heme-thiolate monooxygenases. They oxidize a variety of structurally unrelated compounds, including steroids, fatty acids, and xenobiotics. The sequence is that of Putative cytochrome P450 CYP13A10 (cyp-13A10) from Caenorhabditis elegans.